Consider the following 283-residue polypeptide: ATP phosphoribosyltransferase (283 aa).

The protein belongs to the ATP phosphoribosyltransferase family. Long subfamily. Requires Mg(2+) as cofactor.

The protein resides in the cytoplasm. The catalysed reaction is 1-(5-phospho-beta-D-ribosyl)-ATP + diphosphate = 5-phospho-alpha-D-ribose 1-diphosphate + ATP. It participates in amino-acid biosynthesis; L-histidine biosynthesis; L-histidine from 5-phospho-alpha-D-ribose 1-diphosphate: step 1/9. With respect to regulation, feedback inhibited by histidine. Its function is as follows. Catalyzes the condensation of ATP and 5-phosphoribose 1-diphosphate to form N'-(5'-phosphoribosyl)-ATP (PR-ATP). Has a crucial role in the pathway because the rate of histidine biosynthesis seems to be controlled primarily by regulation of HisG enzymatic activity. The polypeptide is ATP phosphoribosyltransferase (Rhodococcus opacus (strain B4)).